Reading from the N-terminus, the 452-residue chain is MAAAVSSVWAKPGAWALEAEEHEAELKQQPSPTNQKSSAEDSSDFPSLAAAATTKTKKKKGQTISLAEFATYGTAKAKPAPQTERLTQAELVALPTGPRERSAEELDRSKLGGGFRSYGGGRYGDESSSSRWGSSRVSEDGERRGGGFNRDREPSRDSGPSRADEDDNWAAAKKPISGNGFERRERGSGGGFFESQSQSKADEVDSWVSTKPSEPRRFVSSNGGGGDRFEKRGSFESLSRNRDSQYGGGGGSESDTWGRRREESGAANGSPPPSGGSRPRLVLQPRTLPVAVVEVVKPESPVLVIVEKPKGANPFGNARPREEVLAEKGQDWKEIDEKLEAEKLKDIAAAMEKPNEKSTGKMGFGLGNGRKDEERIERSWRKSTEHSEEDAQEEEPAVEGAKKEETEDKPAVEEAKKEETEGEQAVEEAKKEETGGEPAVEEAKKEETEDKI.

Ala-2 bears the N-acetylalanine mark. A disordered region spans residues 20–282 (EEHEAELKQQ…PSGGSRPRLV (263 aa)). Positions 28-37 (QQPSPTNQKS) are enriched in polar residues. Over residues 98–110 (PRERSAEELDRSK) the composition is skewed to basic and acidic residues. The span at 111-122 (LGGGFRSYGGGR) shows a compositional bias: gly residues. Residues 126–136 (ESSSSRWGSSR) show a composition bias toward low complexity. Basic and acidic residues predominate over residues 137-156 (VSEDGERRGGGFNRDREPSR). 2 short sequence motifs (nuclear localization signal) span residues 172 to 179 (AKKPISGN) and 215 to 222 (PRRFVSSN). The segment covering 227-243 (DRFEKRGSFESLSRNRD) has biased composition (basic and acidic residues). 3 positions are modified to phosphoserine: Ser-234, Ser-270, and Ser-300. A compositionally biased stretch (low complexity) spans 265-280 (GAANGSPPPSGGSRPR). A disordered region spans residues 349-452 (AAMEKPNEKS…AKKEETEDKI (104 aa)). Residues 369-386 (GRKDEERIERSWRKSTEH) show a composition bias toward basic and acidic residues. The span at 387-397 (SEEDAQEEEPA) shows a compositional bias: acidic residues. Basic and acidic residues-rich tracts occupy residues 400–419 (GAKK…KKEE) and 441–452 (EEAKKEETEDKI).

The protein belongs to the eIF-4 subunit B family. As to quaternary structure, homodimer. Nonspherical monomer. mRNA-discriminating component of initiation complexes. Interacts with MAD2. Phosphorylated.

The protein localises to the nucleus. In terms of biological role, promotes the eIF4F and eIF4A RNA-dependent ATP-hydrolysis activity with different efficiency depending on mRNAs, thus providing mRNA discrimination during initiation of translation. The sequence is that of Eukaryotic translation initiation factor 4B3 from Arabidopsis thaliana (Mouse-ear cress).